We begin with the raw amino-acid sequence, 518 residues long: Protein translocase subunit SecD (518 aa).

The next 6 membrane-spanning stretches (helical) occupy residues 9–29 (IFLS…NFMQ), 361–381 (LIGF…LGLF), 384–404 (IALS…QATL), 406–426 (LPGI…NVLI), 452–474 (FATI…IFGV), and 486–506 (IGII…IDIW).

It belongs to the SecD/SecF family. SecD subfamily. As to quaternary structure, forms a complex with SecF. Part of the essential Sec protein translocation apparatus which comprises SecA, SecYEG and auxiliary proteins SecDF-YajC and YidC.

Its subcellular location is the cell inner membrane. In terms of biological role, part of the Sec protein translocase complex. Interacts with the SecYEG preprotein conducting channel. SecDF uses the proton motive force (PMF) to complete protein translocation after the ATP-dependent function of SecA. This chain is Protein translocase subunit SecD, found in Rickettsia conorii (strain ATCC VR-613 / Malish 7).